Reading from the N-terminus, the 372-residue chain is 7-methylxanthosine synthase 1 (372 aa).

Tyrosine 18 is an S-adenosyl-L-homocysteine binding site. Positions 21 and 25 each coordinate xanthosine. S-adenosyl-L-homocysteine-binding residues include cysteine 62, asparagine 67, aspartate 101, leucine 102, serine 140, phenylalanine 141, and cysteine 157. Tyrosine 158 contributes to the xanthosine binding site. Cysteine 159 provides a ligand contact to S-adenosyl-L-homocysteine. Xanthosine-binding residues include glutamine 161 and tryptophan 162. Mg(2+) is bound by residues asparagine 179, aspartate 261, phenylalanine 263, and asparagine 264. Xanthosine is bound by residues serine 316, tyrosine 321, and tyrosine 356.

This sequence belongs to the methyltransferase superfamily. Type-7 methyltransferase family. Requires Mg(2+) as cofactor. Expressed in stems, young leaves, floral buds, developing endosperm and immature fruits (grains). Detected in roots and old leaves, but not in mature fruits.

The catalysed reaction is xanthosine + S-adenosyl-L-methionine = 7-methylxanthosine + S-adenosyl-L-homocysteine. It participates in alkaloid biosynthesis. Its function is as follows. Involved in the biosynthesis of caffeine. Specific for xanthosine and could not use xanthosine 5'-monophosphate (XMP) as substrate. Catalyzes the 7-N-methylation activity of xanthosine, but does not have 1-N- or 3-N-methylation activity. This chain is 7-methylxanthosine synthase 1, found in Coffea arabica (Arabian coffee).